The chain runs to 354 residues: Fructose-bisphosphate aldolase (354 aa).

A D-glyceraldehyde 3-phosphate-binding site is contributed by S50. Catalysis depends on D83, which acts as the Proton donor. H84, D105, E142, and H198 together coordinate Zn(2+). Residue G199 participates in dihydroxyacetone phosphate binding. Zn(2+) is bound at residue H232. Residues 233–235 and 275–278 each bind dihydroxyacetone phosphate; these read GSS and NIDT.

The protein belongs to the class II fructose-bisphosphate aldolase family. It depends on Zn(2+) as a cofactor.

It catalyses the reaction beta-D-fructose 1,6-bisphosphate = D-glyceraldehyde 3-phosphate + dihydroxyacetone phosphate. Its pathway is carbohydrate degradation; glycolysis; D-glyceraldehyde 3-phosphate and glycerone phosphate from D-glucose: step 4/4. Catalyzes the aldol condensation of dihydroxyacetone phosphate (DHAP or glycerone-phosphate) with glyceraldehyde 3-phosphate (G3P) to form fructose 1,6-bisphosphate (FBP) in gluconeogenesis and the reverse reaction in glycolysis. This Stutzerimonas stutzeri (Pseudomonas stutzeri) protein is Fructose-bisphosphate aldolase (fba).